A 494-amino-acid chain; its full sequence is UDP-N-acetylmuramate--L-alanine ligase (494 aa).

An ATP-binding site is contributed by 140–146; the sequence is GTHGKTT.

Belongs to the MurCDEF family.

It localises to the cytoplasm. It carries out the reaction UDP-N-acetyl-alpha-D-muramate + L-alanine + ATP = UDP-N-acetyl-alpha-D-muramoyl-L-alanine + ADP + phosphate + H(+). It functions in the pathway cell wall biogenesis; peptidoglycan biosynthesis. Its function is as follows. Cell wall formation. The protein is UDP-N-acetylmuramate--L-alanine ligase of Nostoc sp. (strain PCC 7120 / SAG 25.82 / UTEX 2576).